A 221-amino-acid chain; its full sequence is Toll/interleukin-1 receptor domain-containing adapter protein (221 aa).

Residues 1–82 (MASSTSLPAP…HASDSGSSRW (82 aa)) form a disordered region. Positions 48–67 (SQPTSQDSPLPPSLSSVTSP) are enriched in low complexity. In terms of domain architecture, TIR spans 84-213 (KDYDVCVCHS…GGFRQVKEAV (130 aa)). 2 disulfides stabilise this stretch: C89–C134 and C142–C174.

In terms of assembly, homodimer. Also forms heterodimers with MYD88. May interact with PIK3AP1. Interacts with TLR4 and IRAK2 via their respective TIR domains. Interacts with BMX and TBK1. Interacts with EIF2AK2. Does not interact with IRAK1, nor TLR9. Interacts with TLR2. Interacts with RAGE/AGER. (Microbial infection) In case of infection, interacts with B.melitensis protein TcpB (AC Q8YF53); TcpB abolishes the TLR4-TIRAP interaction and downstream signaling. Phosphorylated by IRAK1 and IRAK4. Also phosphorylated by BTK. In terms of processing, polyubiquitinated. Polyubiquitination follows phosphorylation by BTK and leads to TIRAP degradation. In terms of tissue distribution, highly expressed in liver, kidney, spleen, skeletal muscle and heart. Also detected in peripheral blood leukocytes, lung, placenta, small intestine, thymus, colon and brain.

The protein resides in the cytoplasm. The protein localises to the cell membrane. It is found in the membrane. In terms of biological role, adapter involved in TLR2, TLR4 and RAGE signaling pathways in the innate immune response. Acts via IRAK2 and TRAF-6, leading to the activation of NF-kappa-B, MAPK1, MAPK3 and JNK, and resulting in cytokine secretion and the inflammatory response. Positively regulates the production of TNF-alpha (TNF) and interleukin-6 (IL6). This is Toll/interleukin-1 receptor domain-containing adapter protein (TIRAP) from Homo sapiens (Human).